The sequence spans 178 residues: Mediator of RNA polymerase II transcription subunit 30 (178 aa).

The interval 1-22 (MSTPPLAASGMAPGPFAGPQAQ) is disordered. The residue at position 2 (S2) is an N-acetylserine. Residues 10–22 (GMAPGPFAGPQAQ) show a composition bias toward low complexity. Coiled-coil stretches lie at residues 70-94 (TYQD…KLRL) and 133-173 (RFAS…INAM).

Belongs to the Mediator complex subunit 30 family. As to quaternary structure, component of the Mediator complex, which is composed of MED1, MED4, MED6, MED7, MED8, MED9, MED10, MED11, MED12, MED13, MED13L, MED14, MED15, MED16, MED17, MED18, MED19, MED20, MED21, MED22, MED23, MED24, MED25, MED26, MED27, MED29, MED30, MED31, CCNC, CDK8 and CDC2L6/CDK11. The MED12, MED13, CCNC and CDK8 subunits form a distinct module termed the CDK8 module. Mediator containing the CDK8 module is less active than Mediator lacking this module in supporting transcriptional activation. Individual preparations of the Mediator complex lacking one or more distinct subunits have been variously termed ARC, CRSP, DRIP, PC2, SMCC and TRAP. In terms of tissue distribution, expressed in brain, heart, kidney, liver, lung, pancreas, placenta and skeletal muscle.

The protein resides in the nucleus. Functionally, component of the Mediator complex, a coactivator involved in the regulated transcription of nearly all RNA polymerase II-dependent genes. Mediator functions as a bridge to convey information from gene-specific regulatory proteins to the basal RNA polymerase II transcription machinery. Mediator is recruited to promoters by direct interactions with regulatory proteins and serves as a scaffold for the assembly of a functional preinitiation complex with RNA polymerase II and the general transcription factors. The polypeptide is Mediator of RNA polymerase II transcription subunit 30 (MED30) (Homo sapiens (Human)).